A 1148-amino-acid chain; its full sequence is Alpha-mannosidase 2 (1148 aa).

Over Met1–Arg5 the chain is Cytoplasmic. A helical; Signal-anchor for type II membrane protein transmembrane segment spans residues Gln6 to Leu26. At Asp27–Arg1148 the chain is on the lumenal side. Phosphoserine is present on residues Ser80 and Ser82. Asn93 carries N-linked (GlcNAc...) asparagine glycosylation. Residues His174, Asp176, Asp288, and His568 each coordinate Zn(2+). Asp288 serves as the catalytic Nucleophile. A disordered region spans residues Met1121 to Arg1148.

This sequence belongs to the glycosyl hydrolase 38 family. As to quaternary structure, homodimer; disulfide-linked. Requires Zn(2+) as cofactor. Glycosylated. As to expression, liver.

It localises to the golgi apparatus membrane. It catalyses the reaction N(4)-{beta-D-GlcNAc-(1-&gt;2)-alpha-D-Man-(1-&gt;3)-[alpha-D-Man-(1-&gt;3)-[alpha-D-Man-(1-&gt;6)]-alpha-D-Man-(1-&gt;6)]-beta-D-Man-(1-&gt;4)-beta-D-GlcNAc-(1-&gt;4)-beta-D-GlcNAc}-L-asparaginyl-[protein] + 2 H2O = 2 alpha-D-mannopyranose + an N(4)-{beta-D-GlcNAc-(1-&gt;2)-alpha-D-Man-(1-&gt;3)-[alpha-D-Man-(1-&gt;6)]-beta-D-Man-(1-&gt;4)-beta-D-GlcNAc-(1-&gt;4)-beta-D-GlcNAc}-L-asparaginyl-[protein]. The protein operates within protein modification; protein glycosylation. Its activity is regulated as follows. Inhibited by swainsonine. Functionally, catalyzes the first committed step in the biosynthesis of complex N-glycans. It controls conversion of high mannose to complex N-glycans; the final hydrolytic step in the N-glycan maturation pathway. The sequence is that of Alpha-mannosidase 2 (Man2a1) from Rattus norvegicus (Rat).